A 460-amino-acid polypeptide reads, in one-letter code: Homocitrate synthase (460 aa).

One can recognise a Pyruvate carboxyltransferase domain in the interval valine 3–glutamine 258. Arginine 11 is a 2-oxoglutarate binding site. Mg(2+) is bound at residue glutamate 12. 2-oxoglutarate-binding residues include histidine 75, arginine 135, and threonine 169. Mg(2+) contacts are provided by histidine 197 and histidine 199. The Proton acceptor role is filled by histidine 291.

The protein belongs to the alpha-IPM synthase/homocitrate synthase family. Homocitrate synthase LYS20/LYS21 subfamily. Forms a homotetramer in the absence of lysine, and is in hexadecamer-octamer equilibrium in the presence of lysine. Mg(2+) is required as a cofactor. The cofactor is Mn(2+).

The catalysed reaction is acetyl-CoA + 2-oxoglutarate + H2O = (2R)-homocitrate + CoA + H(+). Its pathway is amino-acid biosynthesis; L-lysine biosynthesis via AAA pathway; L-alpha-aminoadipate from 2-oxoglutarate: step 1/5. Its activity is regulated as follows. Inhibited by lysine. In terms of biological role, catalyzes the aldol-type condensation of 2-oxoglutarate with acetyl-CoA to yield homocitrate. Carries out the first step of the alpha-aminoadipate (AAA) lysine biosynthesis pathway. This is Homocitrate synthase from Sulfurisphaera tokodaii (strain DSM 16993 / JCM 10545 / NBRC 100140 / 7) (Sulfolobus tokodaii).